Here is a 571-residue protein sequence, read N- to C-terminus: Proline--tRNA ligase (571 aa).

The protein belongs to the class-II aminoacyl-tRNA synthetase family. ProS type 1 subfamily. Homodimer.

It localises to the cytoplasm. It carries out the reaction tRNA(Pro) + L-proline + ATP = L-prolyl-tRNA(Pro) + AMP + diphosphate. Functionally, catalyzes the attachment of proline to tRNA(Pro) in a two-step reaction: proline is first activated by ATP to form Pro-AMP and then transferred to the acceptor end of tRNA(Pro). As ProRS can inadvertently accommodate and process non-cognate amino acids such as alanine and cysteine, to avoid such errors it has two additional distinct editing activities against alanine. One activity is designated as 'pretransfer' editing and involves the tRNA(Pro)-independent hydrolysis of activated Ala-AMP. The other activity is designated 'posttransfer' editing and involves deacylation of mischarged Ala-tRNA(Pro). The misacylated Cys-tRNA(Pro) is not edited by ProRS. The sequence is that of Proline--tRNA ligase from Shewanella baltica (strain OS155 / ATCC BAA-1091).